The primary structure comprises 736 residues: Zinc finger CCCH domain-containing protein 14 (736 aa).

M1 is modified (N-acetylmethionine). Composition is skewed to polar residues over residues 77–103 and 131–145; these read TTEP…SNFS and VSTS…NVRQ. The tract at residues 77–145 is disordered; sequence TTEPSSLKSS…QESKTTNVRQ (69 aa). S85 is modified (phosphoserine). Glycyl lysine isopeptide (Lys-Gly) (interchain with G-Cter in SUMO2) cross-links involve residues K99, K139, K175, and K198. Residue S240 is modified to Phosphoserine. Residue K245 forms a Glycyl lysine isopeptide (Lys-Gly) (interchain with G-Cter in SUMO2) linkage. At S281 the chain carries Phosphoserine. Residues K283 and K295 each participate in a glycyl lysine isopeptide (Lys-Gly) (interchain with G-Cter in SUMO2) cross-link. The tract at residues 310–350 is disordered; that stretch reads HDGEEEEEDDDYGSRTGSISSSVSVPAKPERRPSLPPSKQA. Residues S327 and S343 each carry the phosphoserine modification. Residue K357 is modified to N6-acetyllysine; alternate. K357 participates in a covalent cross-link: Glycyl lysine isopeptide (Lys-Gly) (interchain with G-Cter in SUMO2); alternate. K378 is covalently cross-linked (Glycyl lysine isopeptide (Lys-Gly) (interchain with G-Cter in SUMO2)). S390 and S409 each carry phosphoserine. Positions 398–430 are disordered; that stretch reads VVQGQSRTPRISPPIKEEETKGDSVEKNQGTQQ. Residues 412-423 are compositionally biased toward basic and acidic residues; that stretch reads IKEEETKGDSVE. K413 is covalently cross-linked (Glycyl lysine isopeptide (Lys-Gly) (interchain with G-Cter in SUMO2)). Position 421 is a phosphoserine (S421). K489 participates in a covalent cross-link: Glycyl lysine isopeptide (Lys-Gly) (interchain with G-Cter in SUMO2). Phosphoserine occurs at positions 498, 515, 527, and 620. 5 C3H1-type zinc fingers span residues 595-620, 621-640, 641-656, 682-699, and 701-719; these read EKLL…HPIS, PCKA…VHPN, CKYD…PFTH, CRYF…YHPK, and CRFN…HPTI.

The protein belongs to the ZC3H14 family. Homodimer; facilitating circular RNAs (circRNAs) formation. Associates with the spliceosome. Interacts with HOOK2. Interacts with ZFC3H1 in a RNase-sensitive manner. In terms of tissue distribution, expressed in fetal and adult brain. Expressed in fetal and adult temporal lobe.

The protein resides in the nucleus speckle. Its subcellular location is the cytoplasm. Its function is as follows. RNA-binding protein involved in the biogenesis of circular RNAs (circRNAs), which are produced by back-splicing circularization of pre-mRNAs. Acts by binding to both exon-intron boundary and 3'-UTR of pre-mRNAs to promote circRNA biogenesis through dimerization and the association with the spliceosome. Required for spermatogenesis via involvement in circRNA biogenesis. Regulates the pre-mRNA processing of ATP5MC1; preventing its degradation. Also binds the poly(A) tail of mRNAs; controlling poly(A) length in neuronal cells. The polypeptide is Zinc finger CCCH domain-containing protein 14 (Homo sapiens (Human)).